A 63-amino-acid chain; its full sequence is Cecropin-C (63 aa).

The signal sequence occupies residues 1–23 (MNFNKIFVFVALILAISLGQSEA). Position 62 is an arginine amide (arginine 62).

Belongs to the cecropin family.

Its subcellular location is the secreted. Functionally, cecropins have lytic and antibacterial activity against several Gram-positive and Gram-negative bacteria. The sequence is that of Cecropin-C (CecC) from Drosophila orena (Fruit fly).